Here is a 500-residue protein sequence, read N- to C-terminus: Trans-cinnamate 4-monooxygenase (500 aa).

The helical transmembrane segment at 3–23 (ALLVEKVLLGLFVAAVLALVV) threads the bilayer. (E)-cinnamate is bound by residues 213-218 (RSRLSQ) and alanine 302. Cysteine 442 contacts heme.

This sequence belongs to the cytochrome P450 family. Heme is required as a cofactor. As to expression, expressed in roots and leaves.

The protein localises to the membrane. The enzyme catalyses (E)-cinnamate + reduced [NADPH--hemoprotein reductase] + O2 = (E)-4-coumarate + oxidized [NADPH--hemoprotein reductase] + H2O + H(+). It functions in the pathway phenylpropanoid metabolism; trans-4-coumarate biosynthesis; trans-4-coumarate from trans-cinnamate: step 1/1. Its function is as follows. Catalyzes the first oxidative step of the phenylpropanoid pathway in higher plants by transforming trans-cinnamate into p-coumarate. The compounds formed by this pathway are essential components for lignification, pollination, and defense against ultraviolet light, predators and pathogens. This is Trans-cinnamate 4-monooxygenase from Oryza sativa subsp. japonica (Rice).